The primary structure comprises 146 residues: VHWSAEEKQLITGLWGKVNVADCGAEALARLLIVYPWTQRFFASFGNLSSPTAILGNPMVRAHGKKVLTSFGDAVKNLDNIKNTFSQLSELHCDKLHVDPENFRLLGDILIIVLAAHFSKDFTPECQAAWQKLVRVVAHALARKYH.

One can recognise a Globin domain in the interval 2 to 146 (HWSAEEKQLI…VAHALARKYH (145 aa)). Positions 63 and 92 each coordinate heme b.

Belongs to the globin family. As to quaternary structure, heterotetramer of two alpha chains and two beta chains. As to expression, red blood cells.

Functionally, involved in oxygen transport from the lung to the various peripheral tissues. The sequence is that of Hemoglobin subunit beta (HBB) from Phasianus colchicus colchicus (Black-necked pheasant).